A 326-amino-acid chain; its full sequence is CRISPR-associated endonuclease Cas1 (326 aa).

Positions 191, 255, and 269 each coordinate Mn(2+).

It belongs to the CRISPR-associated endonuclease Cas1 family. In terms of assembly, homodimer. Interacts with Cas3, in the absence of crRNA. Mg(2+) serves as cofactor. Requires Mn(2+) as cofactor.

CRISPR (clustered regularly interspaced short palindromic repeat), is an adaptive immune system that provides protection against mobile genetic elements (viruses, transposable elements and conjugative plasmids). CRISPR clusters contain sequences complementary to antecedent mobile elements and target invading nucleic acids. CRISPR clusters are transcribed and processed into CRISPR RNA (crRNA). Acts as a dsDNA endonuclease. Involved in the integration of spacer DNA into the CRISPR cassette. This chain is CRISPR-associated endonuclease Cas1, found in Pectobacterium atrosepticum (strain SCRI 1043 / ATCC BAA-672) (Erwinia carotovora subsp. atroseptica).